Here is a 421-residue protein sequence, read N- to C-terminus: Gamma-glutamyl phosphate reductase (421 aa).

The protein belongs to the gamma-glutamyl phosphate reductase family.

The protein localises to the cytoplasm. The catalysed reaction is L-glutamate 5-semialdehyde + phosphate + NADP(+) = L-glutamyl 5-phosphate + NADPH + H(+). It participates in amino-acid biosynthesis; L-proline biosynthesis; L-glutamate 5-semialdehyde from L-glutamate: step 2/2. Catalyzes the NADPH-dependent reduction of L-glutamate 5-phosphate into L-glutamate 5-semialdehyde and phosphate. The product spontaneously undergoes cyclization to form 1-pyrroline-5-carboxylate. In Pseudomonas fluorescens (strain ATCC BAA-477 / NRRL B-23932 / Pf-5), this protein is Gamma-glutamyl phosphate reductase.